A 394-amino-acid chain; its full sequence is Phosphoglycerate kinase (394 aa).

Residues Asp-21–Asn-23, Arg-36, His-59–Arg-62, Arg-118, and Arg-151 each bind substrate. ATP-binding positions include Lys-202, Gly-293, Glu-324, and Gly-350 to Ser-353.

This sequence belongs to the phosphoglycerate kinase family. As to quaternary structure, monomer.

It localises to the cytoplasm. It carries out the reaction (2R)-3-phosphoglycerate + ATP = (2R)-3-phospho-glyceroyl phosphate + ADP. It functions in the pathway carbohydrate degradation; glycolysis; pyruvate from D-glyceraldehyde 3-phosphate: step 2/5. In Exiguobacterium sp. (strain ATCC BAA-1283 / AT1b), this protein is Phosphoglycerate kinase.